The following is a 333-amino-acid chain: 4-hydroxy-3-methylbut-2-enyl diphosphate reductase (333 aa).

Cysteine 20 contributes to the [4Fe-4S] cluster binding site. (2E)-4-hydroxy-3-methylbut-2-enyl diphosphate is bound by residues histidine 49 and histidine 85. Residues histidine 49 and histidine 85 each contribute to the dimethylallyl diphosphate site. Positions 49 and 85 each coordinate isopentenyl diphosphate. [4Fe-4S] cluster is bound at residue cysteine 107. Histidine 135 lines the (2E)-4-hydroxy-3-methylbut-2-enyl diphosphate pocket. Histidine 135 provides a ligand contact to dimethylallyl diphosphate. Position 135 (histidine 135) interacts with isopentenyl diphosphate. The active-site Proton donor is glutamate 137. Threonine 176 contributes to the (2E)-4-hydroxy-3-methylbut-2-enyl diphosphate binding site. Cysteine 206 provides a ligand contact to [4Fe-4S] cluster. Residues serine 234, serine 235, asparagine 236, and serine 279 each contribute to the (2E)-4-hydroxy-3-methylbut-2-enyl diphosphate site. Serine 234, serine 235, asparagine 236, and serine 279 together coordinate dimethylallyl diphosphate. 4 residues coordinate isopentenyl diphosphate: serine 234, serine 235, asparagine 236, and serine 279.

Belongs to the IspH family. The cofactor is [4Fe-4S] cluster.

It carries out the reaction isopentenyl diphosphate + 2 oxidized [2Fe-2S]-[ferredoxin] + H2O = (2E)-4-hydroxy-3-methylbut-2-enyl diphosphate + 2 reduced [2Fe-2S]-[ferredoxin] + 2 H(+). It catalyses the reaction dimethylallyl diphosphate + 2 oxidized [2Fe-2S]-[ferredoxin] + H2O = (2E)-4-hydroxy-3-methylbut-2-enyl diphosphate + 2 reduced [2Fe-2S]-[ferredoxin] + 2 H(+). Its pathway is isoprenoid biosynthesis; dimethylallyl diphosphate biosynthesis; dimethylallyl diphosphate from (2E)-4-hydroxy-3-methylbutenyl diphosphate: step 1/1. It participates in isoprenoid biosynthesis; isopentenyl diphosphate biosynthesis via DXP pathway; isopentenyl diphosphate from 1-deoxy-D-xylulose 5-phosphate: step 6/6. In terms of biological role, catalyzes the conversion of 1-hydroxy-2-methyl-2-(E)-butenyl 4-diphosphate (HMBPP) into a mixture of isopentenyl diphosphate (IPP) and dimethylallyl diphosphate (DMAPP). Acts in the terminal step of the DOXP/MEP pathway for isoprenoid precursor biosynthesis. The sequence is that of 4-hydroxy-3-methylbut-2-enyl diphosphate reductase from Rhizobium leguminosarum bv. trifolii (strain WSM2304).